We begin with the raw amino-acid sequence, 332 residues long: Leucine carboxyl methyltransferase 1 (332 aa).

S-adenosyl-L-methionine contacts are provided by residues R71, G96, D120, 169-170, and E196; that span reads DL.

The protein belongs to the methyltransferase superfamily. LCMT family.

It catalyses the reaction [phosphatase 2A protein]-C-terminal L-leucine + S-adenosyl-L-methionine = [phosphatase 2A protein]-C-terminal L-leucine methyl ester + S-adenosyl-L-homocysteine. In terms of biological role, methylates the carboxyl group of the C-terminal leucine residue of protein phosphatase 2A catalytic subunits to form alpha-leucine ester residues. This chain is Leucine carboxyl methyltransferase 1 (Lcmt1), found in Rattus norvegicus (Rat).